We begin with the raw amino-acid sequence, 176 residues long: Membrane glycoprotein UL144 (176 aa).

The first 20 residues, 1–20 (MKPLVMLICFGVILLQLGVT), serve as a signal peptide directing secretion. One copy of the TNFR-Cys repeat lies at 58 to 95 (PCPNGTYVSGLYNCTDCTQCNVTQVMIRNCTSTNNTVC). 3 disulfides stabilise this stretch: C59–C71, C74–C87, and C77–C95. The chain crosses the membrane as a helical span at residues 134 to 154 (LAWLSLFIFLVGIILLILYLI).

Interacts with host TRIM23; this interaction causes auto-ubiquitination of TRAF6, leading to NF-kappaB activation.

It is found in the membrane. In terms of biological role, activates NF-kappa-B in a tumor necrosis factor receptor (TNFR)-associated factor 6 (TRAF6)-dependent manner, causing the up-regulation of the chemokine CCL22. This is Membrane glycoprotein UL144 (UL144) from Human cytomegalovirus (strain Merlin) (HHV-5).